The following is a 198-amino-acid chain: Armadillo repeat-containing protein 7 (198 aa).

2 ARM repeats span residues 57–99 and 100–140; these read QVLD…QAGG and LPLI…TSLP. Serine 169 is modified (phosphoserine).

As to quaternary structure, component of the minor spliceosome. Within this complex, interacts with RBM48.

Its function is as follows. As a component of the minor spliceosome, involved in the splicing of U12-type introns in pre-mRNAs. The chain is Armadillo repeat-containing protein 7 (Armc7) from Mus musculus (Mouse).